Here is a 185-residue protein sequence, read N- to C-terminus: Ribosome-recycling factor (185 aa).

This sequence belongs to the RRF family.

Its subcellular location is the cytoplasm. Functionally, responsible for the release of ribosomes from messenger RNA at the termination of protein biosynthesis. May increase the efficiency of translation by recycling ribosomes from one round of translation to another. This is Ribosome-recycling factor from Pectobacterium atrosepticum (strain SCRI 1043 / ATCC BAA-672) (Erwinia carotovora subsp. atroseptica).